Reading from the N-terminus, the 147-residue chain is Ubiquitin-conjugating enzyme E2 D2 (147 aa).

The UBC core domain occupies 1–147 (MALKRIHKEL…AREWTQKYAM (147 aa)). The active-site Glycyl thioester intermediate is Cys85.

Belongs to the ubiquitin-conjugating enzyme family. Interacts with SCF (SKP1-CUL1-F-box protein) E3 ubiquitin ligase complex. Interacts with CNOT4 (via RING domain). Interacts with E3 ubiquitin-protein ligases CBLC, PJA1 and PJA2. Interacts with PDZRN3. Interacts with PPP1R11. Interacts with E3 ubiquitin-protein ligase PHF7; the interaction inhibits cleavage of PHF7 and promotes association of the complex with the nucleosome core particle.

It catalyses the reaction S-ubiquitinyl-[E1 ubiquitin-activating enzyme]-L-cysteine + [E2 ubiquitin-conjugating enzyme]-L-cysteine = [E1 ubiquitin-activating enzyme]-L-cysteine + S-ubiquitinyl-[E2 ubiquitin-conjugating enzyme]-L-cysteine.. The catalysed reaction is S-ubiquitinyl-[E1 ubiquitin-activating enzyme]-L-cysteine + [acceptor protein]-L-lysine = [E1 ubiquitin-activating enzyme]-L-cysteine + N(6)-monoubiquitinyl-[acceptor protein]-L-lysine.. It functions in the pathway protein modification; protein ubiquitination. Accepts ubiquitin from the E1 complex and catalyzes its covalent attachment to other proteins. In vitro catalyzes 'Lys-48'-linked polyubiquitination. Mediates the selective degradation of short-lived and abnormal proteins. Functions in the E6/E6-AP-induced ubiquitination of p53/TP53. Mediates ubiquitination of PEX5 and SQSTM1 and autoubiquitination of STUB1 and TRAF6. Involved in the signal-induced conjugation and subsequent degradation of NFKBIA, FBXW2-mediated GCM1 ubiquitination and degradation, MDM2-dependent degradation of p53/TP53 and the activation of MAVS in the mitochondria by RIGI in response to viral infection. Essential for viral activation of IRF3. This Bos taurus (Bovine) protein is Ubiquitin-conjugating enzyme E2 D2 (UBE2D2).